The following is a 93-amino-acid chain: Ribonuclease P protein component 1 (93 aa).

This sequence belongs to the eukaryotic/archaeal RNase P protein component 1 family. In terms of assembly, consists of a catalytic RNA component and at least 4-5 protein subunits.

The protein localises to the cytoplasm. It carries out the reaction Endonucleolytic cleavage of RNA, removing 5'-extranucleotides from tRNA precursor.. Part of ribonuclease P, a protein complex that generates mature tRNA molecules by cleaving their 5'-ends. This chain is Ribonuclease P protein component 1, found in Methanosphaera stadtmanae (strain ATCC 43021 / DSM 3091 / JCM 11832 / MCB-3).